Here is a 325-residue protein sequence, read N- to C-terminus: Reaction center protein M chain (325 aa).

The next 3 membrane-spanning stretches (helical) occupy residues 54 to 80 (LGPLGILSIVFGSLAIMIIGFNMLASV), 111 to 140 (NDGGWWLMAGLFLTISILLWWVRMYTRARA), and 143 to 168 (MGTHVAWAFAAAIWLYLVLGFIRPVL). (7R,8Z)-bacteriochlorophyll b-binding residues include His183 and His203. Residues 198-226 (FYNPFHALSIAFLYGATLLFAMHGATILA) traverse the membrane as a helical segment. His220 and Glu235 together coordinate Fe cation. Trp253 contacts a ubiquinone. Residues 260 to 286 (NATTESIHRWAWWFAVLCPLCGGIGIL) traverse the membrane as a helical segment. Residue His267 participates in Fe cation binding.

It belongs to the reaction center PufL/M/PsbA/D family. As to quaternary structure, reaction center is composed of four bacteriochlorophylls, two bacteriopheophytins, two ubiquinones, one iron, and three highly hydrophobic polypeptide chains (designated L, M, and H).

Its subcellular location is the cell inner membrane. In terms of biological role, the reaction center is a membrane-bound complex that mediates the initial photochemical event in the electron transfer process of photosynthesis. The sequence is that of Reaction center protein M chain (pufM) from Rubrivivax gelatinosus (strain NBRC 100245 / IL144).